The primary structure comprises 80 residues: Conotoxin Cl9.5 (80 aa).

The N-terminal stretch at Met-1–Ala-23 is a signal peptide. The propeptide occupies Gly-24–Asp-37. Disulfide bonds link Cys-42–Cys-59, Cys-47–Cys-69, and Cys-49–Cys-74.

Expressed by the venom duct.

The protein localises to the secreted. This is Conotoxin Cl9.5 from Californiconus californicus (California cone).